A 1100-amino-acid chain; its full sequence is Beta-alanine-activating enzyme (1100 aa).

The segment at 162-181 is disordered; that stretch reads HKVTDREDRVSAESRTPEKE. ATP contacts are provided by residues 197 to 205, Asp-427, Arg-441, and Lys-526; that span reads TSGTTGTPK. One can recognise a Carrier domain in the interval 552-632; that stretch reads EELWGKLQYL…DVYNHIVQAV (81 aa). Ser-591 carries the post-translational modification O-(pantetheine 4'-phosphoryl)serine. Residues 643-671 form a disordered region; that stretch reads SYTTKRKFSDADPEEASGKPARLESAWPS. Ser-651 carries the post-translational modification Phosphoserine.

It belongs to the ATP-dependent AMP-binding enzyme family.

Functionally, covalently binds beta-alanine in an ATP-dependent manner to form a thioester bond with its phosphopantetheine group and transfers it to an as yet unknown acceptor via an amide bond. May be required for a post-translational protein modification or for post-transcriptional modification of an RNA. The protein is Beta-alanine-activating enzyme (Aasdh) of Mus musculus (Mouse).